Reading from the N-terminus, the 336-residue chain is Protein-glutamate methylesterase/protein-glutamine glutaminase 3 (336 aa).

The Response regulatory domain maps to 2 to 119 (KIAIVNDMPM…PNPREAAAPL (118 aa)). The residue at position 53 (D53) is a 4-aspartylphosphate. In terms of domain architecture, CheB-type methylesterase spans 147 to 336 (VSRRDRLVAI…APRLMEVFTQ (190 aa)). Residues S159, H186, and D279 contribute to the active site.

The protein belongs to the CheB family. Post-translationally, phosphorylated by CheA. Phosphorylation of the N-terminal regulatory domain activates the methylesterase activity.

Its subcellular location is the cytoplasm. It carries out the reaction [protein]-L-glutamate 5-O-methyl ester + H2O = L-glutamyl-[protein] + methanol + H(+). The catalysed reaction is L-glutaminyl-[protein] + H2O = L-glutamyl-[protein] + NH4(+). Its function is as follows. Involved in chemotaxis. Part of a chemotaxis signal transduction system that modulates chemotaxis in response to various stimuli. Catalyzes the demethylation of specific methylglutamate residues introduced into the chemoreceptors (methyl-accepting chemotaxis proteins or MCP) by CheR. Also mediates the irreversible deamidation of specific glutamine residues to glutamic acid. The polypeptide is Protein-glutamate methylesterase/protein-glutamine glutaminase 3 (Pseudomonas syringae pv. tomato (strain ATCC BAA-871 / DC3000)).